Consider the following 507-residue polypeptide: Phosphoprotein (507 aa).

Residues 56–79 (DHQDISKPCFPAAGPGKSSMSRCH) are disordered. 2 positions are modified to phosphoserine: Ser-86 and Ser-151. Over residues 137–160 (DGVEVWGGDEESENSDVDSGEPDP) the composition is skewed to acidic residues. Residues 137–307 (DGVEVWGGDE…QSNIEPEDDY (171 aa)) form a disordered region. Basic and acidic residues-rich tracts occupy residues 189-199 (EIQKLLEDQSR) and 222-233 (TASEKPIKKGTD). Composition is skewed to low complexity over residues 236 to 252 (STSS…GGAT) and 266 to 278 (NASA…SASN). The span at 279–301 (VSPTQGSKTESGTTTSRISQSNI) shows a compositional bias: polar residues. A multimerization region spans residues 304–376 (EDDYDDELFS…LSSFMIAIPG (73 aa)). The segment at 459–507 (ASRSVIRSIIKSSHLGEDRKDYLMSLLNDIQGSKDLAQFHQMLVKILKN) is interaction with the nucleocapsid (N-RNA).

The protein belongs to the morbillivirus P protein family. In terms of assembly, homotetramer. Interacts (via multimerization domain) with polymerase L; this interaction forms the polymerase L-P complex. Interacts (via N-terminus) with N0 (via Ncore); this interaction allows P to chaperon N0 to avoid N polymerization before encapsidation. Interacts (via C-terminus) with N-RNA template; this interaction positions the polymerase on the template for both transcription and replication. Phosphorylation on serines by host CK2 is necessary for the formation of viral factories.

Its function is as follows. Essential cofactor of the RNA polymerase L that plays a central role in the transcription and replication by forming the polymerase complex with RNA polymerase L and recruiting L to the genomic N-RNA template for RNA synthesis. Also plays a central role in the encapsidation of nascent RNA chains by forming the encapsidation complex with the nucleocapsid protein N (N-P complex). Acts as a chaperone for newly synthesized free N protein, so-called N0, allowing encapsidation of nascent RNA chains during replication. The nucleoprotein protein N prevents excessive phosphorylation of P, which leads to down-regulation of viral transcription/ replication. Participates, together with N, in the formation of viral factories (viroplasms), which are large inclusions in the host cytoplasm where replication takes place. In Bos indicus (Zebu), this protein is Phosphoprotein (P/V).